A 101-amino-acid polypeptide reads, in one-letter code: CRISPR-associated endoribonuclease Cas2 (101 aa).

Mg(2+) is bound at residue aspartate 17.

This sequence belongs to the CRISPR-associated endoribonuclease Cas2 protein family. In terms of assembly, homodimer, forms a heterotetramer with a Cas1 homodimer. It depends on Mg(2+) as a cofactor.

Functionally, CRISPR (clustered regularly interspaced short palindromic repeat), is an adaptive immune system that provides protection against mobile genetic elements (viruses, transposable elements and conjugative plasmids). CRISPR clusters contain sequences complementary to antecedent mobile elements and target invading nucleic acids. CRISPR clusters are transcribed and processed into CRISPR RNA (crRNA). Functions as a ssRNA-specific endoribonuclease. Involved in the integration of spacer DNA into the CRISPR cassette. This is CRISPR-associated endoribonuclease Cas2 from Methanopyrus kandleri (strain AV19 / DSM 6324 / JCM 9639 / NBRC 100938).